A 502-amino-acid chain; its full sequence is ATP synthase subunit alpha (502 aa).

169 to 176 (GDRQTGKT) lines the ATP pocket.

It belongs to the ATPase alpha/beta chains family. F-type ATPases have 2 components, CF(1) - the catalytic core - and CF(0) - the membrane proton channel. CF(1) has five subunits: alpha(3), beta(3), gamma(1), delta(1), epsilon(1). CF(0) has three main subunits: a(1), b(2) and c(9-12). The alpha and beta chains form an alternating ring which encloses part of the gamma chain. CF(1) is attached to CF(0) by a central stalk formed by the gamma and epsilon chains, while a peripheral stalk is formed by the delta and b chains.

The protein resides in the cell inner membrane. It catalyses the reaction ATP + H2O + 4 H(+)(in) = ADP + phosphate + 5 H(+)(out). Its function is as follows. Produces ATP from ADP in the presence of a proton gradient across the membrane. The alpha chain is a regulatory subunit. In Solidesulfovibrio magneticus (strain ATCC 700980 / DSM 13731 / RS-1) (Desulfovibrio magneticus), this protein is ATP synthase subunit alpha.